The sequence spans 551 residues: Cilia- and flagella-associated protein 45 (551 aa).

Disordered regions lie at residues methionine 1–valine 30 and arginine 461–glutamate 489. Positions asparagine 157–arginine 526 form a coiled coil.

This sequence belongs to the CFAP45 family. Microtubule inner protein component of sperm flagellar doublet microtubules. Interacts with AK8; dimerization with AK8 may create a cavity at the interface of the dimer that can accommodate AMP. Interacts with CFAP52. Interacts with ENKUR. Directly interacts with DNALI1. Interacts with DNAH11. Interacts with DNAI1. As to expression, expressed in respiratory cells and in sperm (at protein level). Expressed in nasopharyngeal epithelium and trachea.

It is found in the cytoplasm. Its subcellular location is the cytoskeleton. The protein resides in the cilium axoneme. The protein localises to the flagellum axoneme. It localises to the cell projection. It is found in the cilium. Its subcellular location is the flagellum. In terms of biological role, microtubule inner protein (MIP) part of the dynein-decorated doublet microtubules (DMTs) in cilia axoneme, which is required for motile cilia beating. It is an AMP-binding protein that may facilitate dynein ATPase-dependent ciliary and flagellar beating via adenine nucleotide homeostasis. May function as a donor of AMP to AK8 and hence promote ADP production. The sequence is that of Cilia- and flagella-associated protein 45 from Homo sapiens (Human).